Consider the following 178-residue polypeptide: Endothelin-2 (178 aa).

The signal sequence occupies residues 1-24; sequence MVSVPTTWCSVALALLVALHEGKG. A propeptide spanning residues 25-46 is cleaved from the precursor; the sequence is QAAATLEQPASSSHAQGTHLRL. Intrachain disulfides connect cysteine 49-cysteine 63 and cysteine 51-cysteine 59. Positions 70–178 are excised as a propeptide; the sequence is VNTPEQTAPY…RSTHSRWRKR (109 aa). The interval 96–111 is endothelin-like; the sequence is CQCSSARDPACATFCL. The interval 159–178 is disordered; it reads KRQQEAMREPRSTHSRWRKR. Residues 160–170 are compositionally biased toward basic and acidic residues; that stretch reads RQQEAMREPRS.

This sequence belongs to the endothelin/sarafotoxin family. In terms of tissue distribution, expressed in lung, but not in placental stem villi vessels or cultured placental villi smooth muscle cells.

The protein resides in the secreted. Endothelins are endothelium-derived vasoconstrictor peptides. The protein is Endothelin-2 (EDN2) of Homo sapiens (Human).